Here is a 205-residue protein sequence, read N- to C-terminus: Ribosomal RNA large subunit methyltransferase E (205 aa).

Gly60, Trp62, Asp80, Asp96, and Asp121 together coordinate S-adenosyl-L-methionine. The active-site Proton acceptor is Lys161.

This sequence belongs to the class I-like SAM-binding methyltransferase superfamily. RNA methyltransferase RlmE family.

The protein resides in the cytoplasm. It carries out the reaction uridine(2552) in 23S rRNA + S-adenosyl-L-methionine = 2'-O-methyluridine(2552) in 23S rRNA + S-adenosyl-L-homocysteine + H(+). Its function is as follows. Specifically methylates the uridine in position 2552 of 23S rRNA at the 2'-O position of the ribose in the fully assembled 50S ribosomal subunit. This is Ribosomal RNA large subunit methyltransferase E from Azoarcus sp. (strain BH72).